Consider the following 464-residue polypeptide: Trigger factor (464 aa).

Residues 162 to 243 (GDFVSIDLSA…VKSVKERELP (82 aa)) form the PPIase FKBP-type domain. Residues 431-464 (IDTSEFFGKRPSGDGAADEDADQADESTTADAGE) are disordered. The segment covering 446–455 (AADEDADQAD) has biased composition (acidic residues).

Belongs to the FKBP-type PPIase family. Tig subfamily.

The protein resides in the cytoplasm. The enzyme catalyses [protein]-peptidylproline (omega=180) = [protein]-peptidylproline (omega=0). In terms of biological role, involved in protein export. Acts as a chaperone by maintaining the newly synthesized protein in an open conformation. Functions as a peptidyl-prolyl cis-trans isomerase. This Mycobacterium avium (strain 104) protein is Trigger factor.